The chain runs to 370 residues: tRNA-specific 2-thiouridylase MnmA (370 aa).

Residues 12–19 (GMSGGVDS) and leucine 38 each bind ATP. The Nucleophile role is filled by cysteine 105. Residues cysteine 105 and cysteine 204 are joined by a disulfide bond. ATP is bound at residue glycine 129. The interval 153 to 155 (KDQ) is interaction with tRNA. Cysteine 204 serves as the catalytic Cysteine persulfide intermediate. The interval 310 to 311 (RY) is interaction with tRNA.

This sequence belongs to the MnmA/TRMU family.

It is found in the cytoplasm. It carries out the reaction S-sulfanyl-L-cysteinyl-[protein] + uridine(34) in tRNA + AH2 + ATP = 2-thiouridine(34) in tRNA + L-cysteinyl-[protein] + A + AMP + diphosphate + H(+). Catalyzes the 2-thiolation of uridine at the wobble position (U34) of tRNA, leading to the formation of s(2)U34. This Desulfitobacterium hafniense (strain Y51) protein is tRNA-specific 2-thiouridylase MnmA.